A 682-amino-acid polypeptide reads, in one-letter code: Serine/threonine-protein kinase PLK2 (682 aa).

The interval 25–67 is disordered; sequence ACGGDSKKKRPQQPSEDGQSQAQVTPAAPHHHHHHSHSGPEIS. The span at 36–48 shows a compositional bias: polar residues; that stretch reads QQPSEDGQSQAQV. The 253-residue stretch at 79-331 folds into the Protein kinase domain; that stretch reads YCRGKVLGKG…LDDIIRHDFF (253 aa). Residues 85-93 and lysine 108 contribute to the ATP site; that span reads LGKGGFAKC. Catalysis depends on aspartate 202, which acts as the Proton acceptor. Position 236 is a phosphothreonine (threonine 236). The segment at 402-430 is disordered; the sequence is TSITQQPSKHRTDEELQPPPTTFAKSGTS. 2 POLO box domains span residues 500–578 and 598–682; these read WVTK…YMEE and YLLQ…QRCN.

This sequence belongs to the protein kinase superfamily. Ser/Thr protein kinase family. CDC5/Polo subfamily. In terms of assembly, interacts with CIB1. Interacts with NSF; causing NSF dissociation from GRIA2. Catalytic activity is enhanced by phosphorylation of Thr-236.

It localises to the cytoplasm. The protein resides in the cytoskeleton. The protein localises to the microtubule organizing center. It is found in the centrosome. Its subcellular location is the centriole. It localises to the cell projection. The protein resides in the dendrite. The enzyme catalyses L-seryl-[protein] + ATP = O-phospho-L-seryl-[protein] + ADP + H(+). It catalyses the reaction L-threonyl-[protein] + ATP = O-phospho-L-threonyl-[protein] + ADP + H(+). With respect to regulation, activated by phosphorylation of Thr-236. Once activated, activity is stimulated by binding target proteins. Functionally, tumor suppressor serine/threonine-protein kinase involved in synaptic plasticity, centriole duplication and G1/S phase transition. Polo-like kinases act by binding and phosphorylating proteins that are already phosphorylated on a specific motif recognized by the POLO box domains. Phosphorylates CPAP, NPM1, RAPGEF2, RASGRF1, SNCA, SIPA1L1 and SYNGAP1. Plays a key role in synaptic plasticity and memory by regulating the Ras and Rap protein signaling: required for overactivity-dependent spine remodeling by phosphorylating the Ras activator RASGRF1 and the Rap inhibitor SIPA1L1 leading to their degradation by the proteasome. Conversely, phosphorylates the Rap activator RAPGEF2 and the Ras inhibitor SYNGAP1, promoting their activity. Also regulates synaptic plasticity independently of kinase activity, via its interaction with NSF that disrupts the interaction between NSF and the GRIA2 subunit of AMPARs, leading to a rapid rundown of AMPAR-mediated current that occludes long term depression. Required for procentriole formation and centriole duplication by phosphorylating CPAP and NPM1, respectively. Its induction by p53/TP53 suggests that it may participate in the mitotic checkpoint following stress. The polypeptide is Serine/threonine-protein kinase PLK2 (Plk2) (Rattus norvegicus (Rat)).